Here is a 164-residue protein sequence, read N- to C-terminus: Class I hydrophobin rodA (164 aa).

The first 18 residues, 1–18 (MQFSISALVLGLAATVYA), serve as a signal peptide directing secretion. Residue Asn-50 is glycosylated (N-linked (GlcNAc...) asparagine). 4 disulfides stabilise this stretch: Cys-60–Cys-138, Cys-68–Cys-132, Cys-69–Cys-109, and Cys-139–Cys-157.

Belongs to the fungal hydrophobin family. Self-assembles to form functional amyloid fibrils called rodlets. Self-assembly into fibrillar rodlets occurs spontaneously at hydrophobic:hydrophilic interfaces and the rodlets further associate laterally to form amphipathic monolayers.

It is found in the secreted. Its subcellular location is the cell wall. Aerial growth, conidiation, and dispersal of filamentous fungi in the environment rely upon a capability of their secreting small amphipathic proteins called hydrophobins (HPBs) with low sequence identity. Class I can self-assemble into an outermost layer of rodlet bundles on aerial cell surfaces, conferring cellular hydrophobicity that supports fungal growth, development and dispersal; whereas Class II form highly ordered films at water-air interfaces through intermolecular interactions but contribute nothing to the rodlet structure. RodA is a class I hydrophobin involved in the cell surface hydrophobicity. The surface rodlet layer of the conidial cell wall makes airborne conidia of filamentous fungi inert to both innate and adaptive immunity. This is Class I hydrophobin rodA from Penicillium camemberti (strain FM 013).